The sequence spans 244 residues: Tubulin-folding cofactor B (244 aa).

M1 carries the post-translational modification N-acetylmethionine. Y98 carries the phosphotyrosine modification. At S110 the chain carries Phosphoserine. In terms of domain architecture, CAP-Gly spans 183 to 225 (GLTDFKPGYWIGIRYDEPLGKNDGSVNGKRYFECQAKYGAFVK). K219 is subject to N6-acetyllysine.

This sequence belongs to the TBCB family. In terms of assembly, supercomplex made of cofactors A to E. Cofactors A and D function by capturing and stabilizing tubulin in a quasi-native conformation. Cofactor E binds to the cofactor D-tubulin complex; interaction with cofactor C then causes the release of tubulin polypeptides that are committed to the native state. Cofactors B and E can form a heterodimer which binds to alpha-tubulin and enhances their ability to dissociate tubulin heterodimers. Interacts with GAN. Interacts with DCTN1. Ubiquitinated in the presence of GAN which targets it for degradation by the proteasome. Post-translationally, phosphorylation by PAK1 is required for normal function.

It is found in the cytoplasm. The protein resides in the cytoskeleton. In terms of biological role, binds to alpha-tubulin folding intermediates after their interaction with cytosolic chaperonin in the pathway leading from newly synthesized tubulin to properly folded heterodimer. Involved in regulation of tubulin heterodimer dissociation. May function as a negative regulator of axonal growth. The polypeptide is Tubulin-folding cofactor B (TBCB) (Bos taurus (Bovine)).